Reading from the N-terminus, the 499-residue chain is Bifunctional purine biosynthesis protein PurH (499 aa).

The region spanning 1–144 (MIKRALISVF…KNFKDVVVLT (144 aa)) is the MGS-like domain.

It belongs to the PurH family.

It catalyses the reaction (6R)-10-formyltetrahydrofolate + 5-amino-1-(5-phospho-beta-D-ribosyl)imidazole-4-carboxamide = 5-formamido-1-(5-phospho-D-ribosyl)imidazole-4-carboxamide + (6S)-5,6,7,8-tetrahydrofolate. The catalysed reaction is IMP + H2O = 5-formamido-1-(5-phospho-D-ribosyl)imidazole-4-carboxamide. It functions in the pathway purine metabolism; IMP biosynthesis via de novo pathway; 5-formamido-1-(5-phospho-D-ribosyl)imidazole-4-carboxamide from 5-amino-1-(5-phospho-D-ribosyl)imidazole-4-carboxamide (10-formyl THF route): step 1/1. It participates in purine metabolism; IMP biosynthesis via de novo pathway; IMP from 5-formamido-1-(5-phospho-D-ribosyl)imidazole-4-carboxamide: step 1/1. This Clostridium botulinum (strain 657 / Type Ba4) protein is Bifunctional purine biosynthesis protein PurH.